We begin with the raw amino-acid sequence, 159 residues long: SsrA-binding protein (159 aa).

The protein belongs to the SmpB family.

It localises to the cytoplasm. In terms of biological role, required for rescue of stalled ribosomes mediated by trans-translation. Binds to transfer-messenger RNA (tmRNA), required for stable association of tmRNA with ribosomes. tmRNA and SmpB together mimic tRNA shape, replacing the anticodon stem-loop with SmpB. tmRNA is encoded by the ssrA gene; the 2 termini fold to resemble tRNA(Ala) and it encodes a 'tag peptide', a short internal open reading frame. During trans-translation Ala-aminoacylated tmRNA acts like a tRNA, entering the A-site of stalled ribosomes, displacing the stalled mRNA. The ribosome then switches to translate the ORF on the tmRNA; the nascent peptide is terminated with the 'tag peptide' encoded by the tmRNA and targeted for degradation. The ribosome is freed to recommence translation, which seems to be the essential function of trans-translation. The sequence is that of SsrA-binding protein from Frankia casuarinae (strain DSM 45818 / CECT 9043 / HFP020203 / CcI3).